The primary structure comprises 594 residues: Glutamate decarboxylase 1 (594 aa).

Low complexity predominate over residues 1–13; sequence MASSTPSSSATSS. Residues 1 to 25 form a disordered region; that stretch reads MASSTPSSSATSSNAGPDPNTTNLR. Ser-78 carries the phosphoserine modification. 190–192 provides a ligand contact to 4-aminobutanoate; that stretch reads QLS. Lys-405 bears the N6-(pyridoxal phosphate)lysine mark. Arg-567 serves as a coordination point for 4-aminobutanoate.

The protein belongs to the group II decarboxylase family. Homodimer. The cofactor is pyridoxal 5'-phosphate.

It carries out the reaction L-glutamate + H(+) = 4-aminobutanoate + CO2. Catalyzes the synthesis of the inhibitory neurotransmitter gamma-aminobutyric acid (GABA) with pyridoxal 5'-phosphate as cofactor. The polypeptide is Glutamate decarboxylase 1 (GAD1) (Sus scrofa (Pig)).